A 350-amino-acid polypeptide reads, in one-letter code: Atypical chemokine receptor 4 (350 aa).

Over 1 to 41 the chain is Extracellular; the sequence is MAVEYNQSTDYYYEENEMNDTHDYSQYEVICIKEEVRKFAK. N-linked (GlcNAc...) asparagine glycans are attached at residues N6 and N19. The helical transmembrane segment at 42–66 threads the bilayer; sequence VFLPAFFTIAFIIGLAGNSTVVAIY. Topologically, residues 67 to 79 are cytoplasmic; it reads AYYKKRRTKTDVY. A helical membrane pass occupies residues 80 to 99; it reads ILNLAVADLFLLFTLPFWAV. Topologically, residues 100–113 are extracellular; it reads NAVHGWVLGKIMCK. C112 and C184 are oxidised to a cystine. The chain crosses the membrane as a helical span at residues 114–135; it reads VTSALYTVNFVSGMQFLACIST. Topologically, residues 136–153 are cytoplasmic; sequence DRYWAVTKAPSQSGVGKP. A helical transmembrane segment spans residues 154 to 175; sequence CWVICFCVWVAAILLSIPQLVF. At 176–199 the chain is on the extracellular side; that stretch reads YTVNHKARCVPIFPYHLGTSMKAS. Residues 200 to 222 form a helical membrane-spanning segment; sequence IQILEICIGFIIPFLIMAVCYFI. Topologically, residues 223 to 241 are cytoplasmic; that stretch reads TAKTLIKMPNIKKSQPLKV. Residues 242–265 form a helical membrane-spanning segment; it reads LFTVVIVFIVTQLPYNIVKFCQAI. The Extracellular portion of the chain corresponds to 266–283; the sequence is DIIYSLITDCDMSKRMDV. The chain crosses the membrane as a helical span at residues 284 to 306; sequence AIQITESIALFHSCLNPVLYVFM. Topologically, residues 307-350 are cytoplasmic; it reads GTSFKNYIMKVAKKYGSWRRQRQNVEEIPFESEDATEPTSTFSI.

Belongs to the G-protein coupled receptor 1 family. Atypical chemokine receptor subfamily. As to quaternary structure, forms heteromers with CXCR3. Interacts with ARRB1 and ARRB2. In terms of processing, the Ser/Thr residues in the C-terminal cytoplasmic tail may be phosphorylated. As to expression, expressed in circumvallate and fungiform papillae, olfactory epithelium and lung. Lower expression in liver, kidney and tongue epithelium bearing no taste papillae. Very low expression in the cerebral cortex of the brain.

The protein resides in the early endosome. Its subcellular location is the recycling endosome. It is found in the cell membrane. Functionally, atypical chemokine receptor that controls chemokine levels and localization via high-affinity chemokine binding that is uncoupled from classic ligand-driven signal transduction cascades, resulting instead in chemokine sequestration, degradation, or transcytosis. Also known as interceptor (internalizing receptor) or chemokine-scavenging receptor or chemokine decoy receptor. Acts as a receptor for chemokines CCL2, CCL8, CCL13, CCL19, CCL21 and CCL25. Chemokine-binding does not activate G-protein-mediated signal transduction but instead induces beta-arrestin recruitment, leading to ligand internalization. Plays an important role in controlling the migration of immune and cancer cells that express chemokine receptors CCR7 and CCR9, by reducing the availability of CCL19, CCL21, and CCL25 through internalization. Negatively regulates CXCR3-induced chemotaxis. Regulates T-cell development in the thymus. In Bos taurus (Bovine), this protein is Atypical chemokine receptor 4 (ACKR4).